The primary structure comprises 220 residues: ATP phosphoribosyltransferase (220 aa).

The protein belongs to the ATP phosphoribosyltransferase family. Short subfamily. As to quaternary structure, heteromultimer composed of HisG and HisZ subunits.

The protein resides in the cytoplasm. It catalyses the reaction 1-(5-phospho-beta-D-ribosyl)-ATP + diphosphate = 5-phospho-alpha-D-ribose 1-diphosphate + ATP. It functions in the pathway amino-acid biosynthesis; L-histidine biosynthesis; L-histidine from 5-phospho-alpha-D-ribose 1-diphosphate: step 1/9. Catalyzes the condensation of ATP and 5-phosphoribose 1-diphosphate to form N'-(5'-phosphoribosyl)-ATP (PR-ATP). Has a crucial role in the pathway because the rate of histidine biosynthesis seems to be controlled primarily by regulation of HisG enzymatic activity. This is ATP phosphoribosyltransferase from Janthinobacterium sp. (strain Marseille) (Minibacterium massiliensis).